The primary structure comprises 486 residues: UDP-N-acetylmuramate--L-alanine ligase (486 aa).

ATP is bound at residue 123-129; that stretch reads GTHGKTT.

This sequence belongs to the MurCDEF family.

It localises to the cytoplasm. It carries out the reaction UDP-N-acetyl-alpha-D-muramate + L-alanine + ATP = UDP-N-acetyl-alpha-D-muramoyl-L-alanine + ADP + phosphate + H(+). The protein operates within cell wall biogenesis; peptidoglycan biosynthesis. Functionally, cell wall formation. The sequence is that of UDP-N-acetylmuramate--L-alanine ligase from Pseudomonas savastanoi pv. phaseolicola (strain 1448A / Race 6) (Pseudomonas syringae pv. phaseolicola (strain 1448A / Race 6)).